The following is a 338-amino-acid chain: MALCVLQNAVRGAAALPRLKASLVASVCRPGYSSLSNHKYVPRRAVLYVPGNDEKKIRKIPSLKVDCAVLDCEDGVAENKKNEARLRIAKTLEDFDLGTTEKCVRINSVSSGLAEADLETFLQARVLPSSLMLPKVEGPEEIQWFSDKFSLHLKGRKLEQPMNLIPFVETAMGLLNFKAVCEETLKIGPQVGLFLDAVVFGGEDFRASIGATSNKDTQDILYARQKIVVTAKAFGLQAIDLVYIDFRDEDGLLRQSREAAAMGFTGKQVIHPNQIAVVQEQFTPTPEKIRWAEELIAAFKEHQQLGKGAFTFQGSMIDMPLLKQAQNIVTLATSIKEK.

The N-terminal 20 residues, 1–20, are a transit peptide targeting the mitochondrion; that stretch reads MALCVLQNAVRGAAALPRLK. Residues tyrosine 48, lysine 55, and lysine 59 each contribute to the substrate site. N6-acetyllysine is present on residues lysine 55, lysine 59, and lysine 64. N6-acetyllysine; alternate occurs at positions 80 and 90. An N6-succinyllysine; alternate mark is found at lysine 80 and lysine 90. Arginine 105 contacts substrate. Mg(2+) contacts are provided by glutamate 169 and aspartate 204. Residue 270-271 coordinates substrate; the sequence is IH. Lysine 307 carries the post-translational modification N6-succinyllysine. Residue aspartate 318 is part of the active site.

Belongs to the HpcH/HpaI aldolase family. Citrate lyase beta subunit-like subfamily. As to quaternary structure, homotrimer. The cofactor is Mg(2+).

The protein resides in the mitochondrion. The enzyme catalyses glyoxylate + acetyl-CoA + H2O = (S)-malate + CoA + H(+). The catalysed reaction is propanoyl-CoA + glyoxylate + H2O = 3-methylmalate + CoA + H(+). It catalyses the reaction (3S)-citramalyl-CoA = pyruvate + acetyl-CoA. It carries out the reaction (S)-malyl-CoA + H2O = (S)-malate + CoA + H(+). Mitochondrial citramalyl-CoA lyase indirectly involved in the vitamin B12 metabolism. Converts citramalyl-CoA into acetyl-CoA and pyruvate in the C5-dicarboxylate catabolism pathway. The C5-dicarboxylate catabolism pathway is required to detoxify itaconate, a vitamin B12-poisoning metabolite. Also acts as a malate synthase in vitro, converting glyoxylate and acetyl-CoA to malate. Also displays malyl-CoA thioesterase activity. Also acts as a beta-methylmalate synthase in vitro, by mediating conversion of glyoxylate and propionyl-CoA to beta-methylmalate. Also has very weak citramalate synthase activity in vitro. In Rattus norvegicus (Rat), this protein is Citramalyl-CoA lyase, mitochondrial (Clybl).